Reading from the N-terminus, the 162-residue chain is MLEFNATLLAQIVDFIILLIFLRLVAYKPLMKLLSERSEHIERNIAAAEKERQQAEQLRASYEAEMRRAREQAQEIIQKATKAGEEQALQIIENAKNETVRMKETALAEIEREKQKAMAELRDQVVTLSILVAGKIINRSMSSEIQHEIVRDFIKEAGELPC.

Residues 2-22 (LEFNATLLAQIVDFIILLIFL) form a helical membrane-spanning segment.

It belongs to the ATPase B chain family. In terms of assembly, F-type ATPases have 2 components, F(1) - the catalytic core - and F(0) - the membrane proton channel. F(1) has five subunits: alpha(3), beta(3), gamma(1), delta(1), epsilon(1). F(0) has three main subunits: a(1), b(2) and c(10-14). The alpha and beta chains form an alternating ring which encloses part of the gamma chain. F(1) is attached to F(0) by a central stalk formed by the gamma and epsilon chains, while a peripheral stalk is formed by the delta and b chains.

The protein localises to the cell membrane. Functionally, f(1)F(0) ATP synthase produces ATP from ADP in the presence of a proton or sodium gradient. F-type ATPases consist of two structural domains, F(1) containing the extramembraneous catalytic core and F(0) containing the membrane proton channel, linked together by a central stalk and a peripheral stalk. During catalysis, ATP synthesis in the catalytic domain of F(1) is coupled via a rotary mechanism of the central stalk subunits to proton translocation. Its function is as follows. Component of the F(0) channel, it forms part of the peripheral stalk, linking F(1) to F(0). The chain is ATP synthase subunit b from Pelotomaculum thermopropionicum (strain DSM 13744 / JCM 10971 / SI).